Reading from the N-terminus, the 246-residue chain is Chloroplastic group IIB intron splicing facilitator CRS2-A, chloroplastic (246 aa).

A chloroplast-targeting transit peptide spans 1 to 34 (MFCASSSPITSPLYPKAYKFSQTKSNSKRFSSLR). Tyrosine 64 contributes to the tRNA binding site. The active-site Proton acceptor is the histidine 69. Positions 114, 116, and 162 each coordinate tRNA.

The protein belongs to the PTH family. CRS2 subfamily. Part of large ribonucleo-protein complexes that include group IIB introns and either CAF1 or CAF2.

It is found in the plastid. The protein resides in the chloroplast stroma. Its function is as follows. Required for the splicing of group IIB introns in chloroplasts. The chain is Chloroplastic group IIB intron splicing facilitator CRS2-A, chloroplastic (CRS2A) from Arabidopsis thaliana (Mouse-ear cress).